The primary structure comprises 200 residues: Late protein I196L (200 aa).

2 tandem repeats follow at residues 28-48 (SNSL…PTTS) and 49-69 (SNSL…PTTS). The stretch at 70–91 (SNYLTSAISTNISDKEEDTPFS) is one 3; approximate repeat.

This sequence belongs to the asfivirus I196L family.

The polypeptide is Late protein I196L (African swine fever virus (isolate Tick/South Africa/Pretoriuskop Pr4/1996) (ASFV)).